A 575-amino-acid chain; its full sequence is 3-hydroxy-3-methylglutaryl-coenzyme A reductase 1 (575 aa).

Residues M1–A13 show a composition bias toward basic residues. The tract at residues M1–K25 is disordered. Transmembrane regions (helical) follow at residues A29 to A49 and E73 to I93. Positions Q97 to E160 are linker. A glycan (N-linked (GlcNAc...) asparagine) is linked at N132. Residues D161–S575 are catalytic. The active-site Charge relay system is E254. N-linked (GlcNAc...) asparagine glycosylation occurs at N318. Catalysis depends on charge relay system residues K386 and D462. A helical transmembrane segment spans residues L531–I551. H560 serves as the catalytic Proton donor. An N-linked (GlcNAc...) asparagine glycan is attached at N564.

Belongs to the HMG-CoA reductase family.

The protein resides in the endoplasmic reticulum membrane. It localises to the mitochondrion membrane. The protein localises to the plastid membrane. The enzyme catalyses (R)-mevalonate + 2 NADP(+) + CoA = (3S)-3-hydroxy-3-methylglutaryl-CoA + 2 NADPH + 2 H(+). The protein operates within metabolic intermediate biosynthesis; (R)-mevalonate biosynthesis; (R)-mevalonate from acetyl-CoA: step 3/3. In terms of biological role, catalyzes the synthesis of mevalonate. The specific precursor of all isoprenoid compounds present in plants. The sequence is that of 3-hydroxy-3-methylglutaryl-coenzyme A reductase 1 (HMGR1) from Hevea brasiliensis (Para rubber tree).